A 211-amino-acid chain; its full sequence is Thymidylate kinase (211 aa).

7–14 (GIDGCGKT) provides a ligand contact to ATP.

This sequence belongs to the thymidylate kinase family.

The enzyme catalyses dTMP + ATP = dTDP + ADP. Functionally, phosphorylation of dTMP to form dTDP in both de novo and salvage pathways of dTTP synthesis. In Anaplasma marginale (strain St. Maries), this protein is Thymidylate kinase.